The following is a 1013-amino-acid chain: Dichlorochromopyrrolate synthase (1013 aa).

The protein belongs to the RebD family. Homodimer. Heme is required as a cofactor.

The enzyme catalyses 2 3-(7-chloroindol-3-yl)-2-iminopropanoate + H2O2 = dichlorochromopyrrolate + NH4(+) + 2 H2O + H(+). It carries out the reaction 2 2-iminio-3-(indol-3-yl)propanoate + H2O2 = chromopyrrolate + NH4(+) + 2 H2O + H(+). The catalysed reaction is 2 H2O2 = O2 + 2 H2O. Involved in the biosynthesis of the indolocarbazole antitumor agent rebeccamycin. Catalyzes the hydrogen peroxide-dependent dimerization of two L-tryptophan-derived molecules (imine form of indole 3-pyruvate (IPA)), to form dichlorochromopyrrolic acid (CPA), the precursor for the six-ring bisindolopyrrolocarbazole scaffold of the rebeccamycin. The hydrogen peroxide is provided together with iminoindolpropanoate by RebO. Due to the instability of indole 3-pyruvate (IPA), which is hydrolyzed in solution and exits in equilibrium with the predominant ketone form of IPA, the concerted functioning of the RebO/RebD system appears to prevent the buildup of significant amounts of IPA and its imine in solution, effectively shepherding the imine further down the biosynthetic chain. This is Dichlorochromopyrrolate synthase (rebD) from Lentzea aerocolonigenes (Lechevalieria aerocolonigenes).